The following is a 299-amino-acid chain: Arginase (299 aa).

Mn(2+) contacts are provided by histidine 99, aspartate 122, histidine 124, and aspartate 126. Residues 124–128 (HGDVN), 135–137 (SGN), and aspartate 178 each bind substrate. The Mn(2+) site is built by aspartate 226 and aspartate 228. Residues threonine 240 and glutamate 271 each coordinate substrate.

It belongs to the arginase family. Homohexamer. Requires Mn(2+) as cofactor.

The enzyme catalyses L-arginine + H2O = urea + L-ornithine. It participates in nitrogen metabolism; urea cycle; L-ornithine and urea from L-arginine: step 1/1. Controls arginine catabolism. The sequence is that of Arginase (rocF) from Bacillus caldovelox.